Reading from the N-terminus, the 138-residue chain is Small ribosomal subunit protein uS11c (138 aa).

Positions 1–22 (MAKSIPRISSRRNGPIGSGKTV) are disordered.

The protein belongs to the universal ribosomal protein uS11 family. As to quaternary structure, part of the 30S ribosomal subunit.

The protein localises to the plastid. The protein is Small ribosomal subunit protein uS11c of Cuscuta exaltata (Tall dodder).